The sequence spans 371 residues: Sporulation-specific protein 2 (371 aa).

The protein resides in the spore wall. Essential for sporulation and seems to have a role at the time of, or after, initiation of nuclear division. Appears to have a role in outer spore wall formation. In Saccharomyces cerevisiae (strain ATCC 204508 / S288c) (Baker's yeast), this protein is Sporulation-specific protein 2 (SSP2).